Reading from the N-terminus, the 184-residue chain is Photosystem I assembly protein Ycf4 (184 aa).

The next 2 helical transmembrane spans lie at valine 22 to serine 42 and isoleucine 57 to serine 77.

The protein belongs to the Ycf4 family.

It localises to the plastid. The protein resides in the chloroplast thylakoid membrane. Seems to be required for the assembly of the photosystem I complex. In Morus indica (Mulberry), this protein is Photosystem I assembly protein Ycf4.